A 489-amino-acid polypeptide reads, in one-letter code: Rhamnulokinase (489 aa).

ATP is bound at residue 13–17 (ASSGR). An intrachain disulfide couples C68 to C222. Residues G83 and 236-238 (HDT) each bind substrate. The active-site Proton acceptor is D237. T259 contributes to the ATP binding site. N296 serves as a coordination point for substrate. Q304 contacts ATP. C353 and C370 are joined by a disulfide. Residue G402 participates in ATP binding. C413 and C417 form a disulfide bridge.

It belongs to the rhamnulokinase family. Mg(2+) is required as a cofactor.

It carries out the reaction L-rhamnulose + ATP = L-rhamnulose 1-phosphate + ADP + H(+). It functions in the pathway carbohydrate degradation; L-rhamnose degradation; glycerone phosphate from L-rhamnose: step 2/3. Involved in the catabolism of L-rhamnose (6-deoxy-L-mannose). Catalyzes the transfer of the gamma-phosphate group from ATP to the 1-hydroxyl group of L-rhamnulose to yield L-rhamnulose 1-phosphate. The chain is Rhamnulokinase from Salmonella schwarzengrund (strain CVM19633).